The primary structure comprises 367 residues: Viral cathepsin (367 aa).

The first 25 residues, 1–25 (MRKYHSNIMHKIITFVSLLWTFVVC), serve as a signal peptide directing secretion. The propeptide at 26–156 (DEISLHTSSS…IVKGAPDIRL (131 aa)) is activation peptide. N-linked (GlcNAc...) asparagine; by host glycans are attached at residues asparagine 103 and asparagine 135. 3 cysteine pairs are disulfide-bonded: cysteine 177–cysteine 218, cysteine 211–cysteine 251, and cysteine 306–cysteine 354. Cysteine 180 is an active-site residue. Residues histidine 313 and asparagine 333 contribute to the active site.

Belongs to the peptidase C1 family. Post-translationally, synthesized as an inactive proenzyme and activated by proteolytic removal of the inhibitory propeptide.

The catalysed reaction is Endopeptidase of broad specificity, hydrolyzing substrates of both cathepsin L and cathepsin B.. Its function is as follows. Cysteine protease that plays an essential role in host liquefaction to facilitate horizontal transmission of the virus. May participate in the degradation of foreign protein expressed by the baculovirus system. This chain is Viral cathepsin (VCATH), found in Lepidoptera (butterflies and moths).